A 286-amino-acid polypeptide reads, in one-letter code: Lipoyl synthase (286 aa).

[4Fe-4S] cluster contacts are provided by Cys-38, Cys-43, Cys-49, Cys-64, Cys-68, Cys-71, and Ser-276. Residues 50 to 265 enclose the Radical SAM core domain; the sequence is WEQGVATFMI…ENIALDMGFL (216 aa).

Belongs to the radical SAM superfamily. Lipoyl synthase family. The cofactor is [4Fe-4S] cluster.

The protein localises to the cytoplasm. The enzyme catalyses [[Fe-S] cluster scaffold protein carrying a second [4Fe-4S](2+) cluster] + N(6)-octanoyl-L-lysyl-[protein] + 2 oxidized [2Fe-2S]-[ferredoxin] + 2 S-adenosyl-L-methionine + 4 H(+) = [[Fe-S] cluster scaffold protein] + N(6)-[(R)-dihydrolipoyl]-L-lysyl-[protein] + 4 Fe(3+) + 2 hydrogen sulfide + 2 5'-deoxyadenosine + 2 L-methionine + 2 reduced [2Fe-2S]-[ferredoxin]. Its pathway is protein modification; protein lipoylation via endogenous pathway; protein N(6)-(lipoyl)lysine from octanoyl-[acyl-carrier-protein]: step 2/2. Catalyzes the radical-mediated insertion of two sulfur atoms into the C-6 and C-8 positions of the octanoyl moiety bound to the lipoyl domains of lipoate-dependent enzymes, thereby converting the octanoylated domains into lipoylated derivatives. This is Lipoyl synthase from Karelsulcia muelleri (strain GWSS) (Sulcia muelleri).